The primary structure comprises 558 residues: uncharacterized protein (558 aa).

The next 5 membrane-spanning stretches (helical) occupy residues 15 to 32 (PSVT…ALGL), 39 to 61 (IGTI…HFGV), 76 to 95 (LVIF…FPSL), 104 to 126 (LISL…ILGI), and 166 to 188 (MALA…LALL). RCK C-terminal domains follow at residues 196 to 278 (EERD…LFGK) and 286 to 370 (RPDI…ILGD). The next 5 helical transmembrane spans lie at 383-405 (LFGG…GVSM), 409-426 (LGLA…GAFG), 446-468 (FGII…DTII), 473-495 (LLWV…WASI), and 533-555 (VVYA…IMIL).

Belongs to the AAE transporter (TC 2.A.81) family.

It is found in the cell membrane. This is an uncharacterized protein from Porphyromonas gingivalis (strain ATCC BAA-308 / W83).